The sequence spans 438 residues: Glutamyl-tRNA(Gln) amidotransferase subunit D (438 aa).

The Asparaginase/glutaminase domain maps to 92–422 (PTITILGTGG…REAKKMMLTN (331 aa)). Catalysis depends on residues Thr-102, Thr-178, Asp-179, and Lys-256.

It belongs to the asparaginase 1 family. GatD subfamily. Heterodimer of GatD and GatE.

The enzyme catalyses L-glutamyl-tRNA(Gln) + L-glutamine + ATP + H2O = L-glutaminyl-tRNA(Gln) + L-glutamate + ADP + phosphate + H(+). Its function is as follows. Allows the formation of correctly charged Gln-tRNA(Gln) through the transamidation of misacylated Glu-tRNA(Gln) in organisms which lack glutaminyl-tRNA synthetase. The reaction takes place in the presence of glutamine and ATP through an activated gamma-phospho-Glu-tRNA(Gln). The GatDE system is specific for glutamate and does not act on aspartate. The chain is Glutamyl-tRNA(Gln) amidotransferase subunit D from Pyrococcus furiosus (strain ATCC 43587 / DSM 3638 / JCM 8422 / Vc1).